The chain runs to 314 residues: Porphobilinogen deaminase (314 aa).

The residue at position 249 (C249) is an S-(dipyrrolylmethanemethyl)cysteine.

This sequence belongs to the HMBS family. As to quaternary structure, monomer. Requires dipyrromethane as cofactor.

It carries out the reaction 4 porphobilinogen + H2O = hydroxymethylbilane + 4 NH4(+). It participates in porphyrin-containing compound metabolism; protoporphyrin-IX biosynthesis; coproporphyrinogen-III from 5-aminolevulinate: step 2/4. Functionally, tetrapolymerization of the monopyrrole PBG into the hydroxymethylbilane pre-uroporphyrinogen in several discrete steps. This chain is Porphobilinogen deaminase, found in Brucella suis biovar 1 (strain 1330).